The primary structure comprises 1316 residues: DNA-directed RNA polymerase subunit beta' (1316 aa).

Positions 60, 62, 75, and 78 each coordinate Zn(2+). Residues Asp-535, Asp-537, and Asp-539 each contribute to the Mg(2+) site. The Zn(2+) site is built by Cys-891, Cys-968, Cys-975, and Cys-978.

This sequence belongs to the RNA polymerase beta' chain family. In terms of assembly, the RNAP catalytic core consists of 2 alpha, 1 beta, 1 beta' and 1 omega subunit. When a sigma factor is associated with the core the holoenzyme is formed, which can initiate transcription. It depends on Mg(2+) as a cofactor. Requires Zn(2+) as cofactor.

It catalyses the reaction RNA(n) + a ribonucleoside 5'-triphosphate = RNA(n+1) + diphosphate. Functionally, DNA-dependent RNA polymerase catalyzes the transcription of DNA into RNA using the four ribonucleoside triphosphates as substrates. This chain is DNA-directed RNA polymerase subunit beta', found in Mycobacterium ulcerans (strain Agy99).